A 329-amino-acid chain; its full sequence is UPF0158 protein CT_429 (329 aa).

The tract at residues 292 to 329 (GYDSDGETGDFFDEEYDDEEEEIKPKKTTKRGRKKSRS) is disordered. The span at 295–313 (SDGETGDFFDEEYDDEEEE) shows a compositional bias: acidic residues. Over residues 317–329 (KKTTKRGRKKSRS) the composition is skewed to basic residues.

This sequence belongs to the UPF0158 family.

The polypeptide is UPF0158 protein CT_429 (Chlamydia trachomatis serovar D (strain ATCC VR-885 / DSM 19411 / UW-3/Cx)).